Consider the following 415-residue polypeptide: MNTNKLSLRRNVIYLAVVQGSNYLLPLLTFPYLVRTLGPENFGIFGFCQATMLYMIMFVEYGFNLTATQSIAKAADSKDKVTSIFWAVIFSKIVLIVITLIFLTSMTLLVPEYNKHAVIIWSFVPALVGNLIYPIWLFQGKEKMKWLTLSSILSRLAIIPLTFIFVNTKSDIAIAGFIQSSANLVAGIIALAIVVHEGWIGKVTLSLHNVRRSLADGFHVFISTSAISLYSTGIVIILGFISGPTSVGNFNAANTIRNALQGLLNPITQAIYPRISSTLVLNRVKGVILIKKSLTCLSLIGGAFSLILLLGASILVKISIGPGYDNAVIVLMIISPLPFLISLSNVYGIQVMLTHNYKKEFSKILIAAGLLSLLLIFPLTTLFKEIGAAITLLATECLVTSLMLMFVRNNKLLVC.

The Cytoplasmic segment spans residues 1–11; it reads MNTNKLSLRRN. The chain crosses the membrane as a helical span at residues 12 to 32; that stretch reads VIYLAVVQGSNYLLPLLTFPY. The Periplasmic segment spans residues 33–41; that stretch reads LVRTLGPEN. Residues 42–62 form a helical membrane-spanning segment; that stretch reads FGIFGFCQATMLYMIMFVEYG. Over 63–83 the chain is Cytoplasmic; that stretch reads FNLTATQSIAKAADSKDKVTS. The helical transmembrane segment at 84–104 threads the bilayer; the sequence is IFWAVIFSKIVLIVITLIFLT. Residues 105–117 lie on the Periplasmic side of the membrane; the sequence is SMTLLVPEYNKHA. A helical membrane pass occupies residues 118–138; that stretch reads VIIWSFVPALVGNLIYPIWLF. Residues 139–173 are Cytoplasmic-facing; the sequence is QGKEKMKWLTLSSILSRLAIIPLTFIFVNTKSDIA. Residues 174-194 form a helical membrane-spanning segment; that stretch reads IAGFIQSSANLVAGIIALAIV. Residues 195–220 are Periplasmic-facing; that stretch reads VHEGWIGKVTLSLHNVRRSLADGFHV. The helical transmembrane segment at 221 to 241 threads the bilayer; it reads FISTSAISLYSTGIVIILGFI. Residues 242–295 lie on the Cytoplasmic side of the membrane; it reads SGPTSVGNFNAANTIRNALQGLLNPITQAIYPRISSTLVLNRVKGVILIKKSLT. The helical transmembrane segment at 296–316 threads the bilayer; it reads CLSLIGGAFSLILLLGASILV. The Periplasmic segment spans residues 317–328; the sequence is KISIGPGYDNAV. A helical membrane pass occupies residues 329–349; that stretch reads IVLMIISPLPFLISLSNVYGI. The Cytoplasmic segment spans residues 350–362; sequence QVMLTHNYKKEFS. The helical transmembrane segment at 363 to 383 threads the bilayer; sequence KILIAAGLLSLLLIFPLTTLF. Topologically, residues 384–385 are periplasmic; sequence KE. Residues 386-406 traverse the membrane as a helical segment; the sequence is IGAAITLLATECLVTSLMLMF. Topologically, residues 407–415 are cytoplasmic; sequence VRNNKLLVC.

This sequence belongs to the polysaccharide synthase family.

The protein resides in the cell inner membrane. Its pathway is bacterial outer membrane biogenesis; LPS O-antigen biosynthesis. In terms of biological role, may be involved in the translocation process of the nascent O-polysaccharide molecules and/or its ligation to lipid A core units. The protein is Putative O-antigen transporter (rfbX) of Escherichia coli (strain K12).